The sequence spans 248 residues: MADPNNPITEPKAIIQSSTSSSVTIVPVPTCGDSLSDSATCENPCPLDTITTTTTTVCFAAPSSTASGNDINTLMATDTDISRRKKNPVYRGIRCRSGKWVSEIREPKKTTRVWLGTYPTPEMAAAAYDVAALALKGGDTLLNFPDSLGSYPIPLSSSAAHIRCAAAAAAATRGAAGAAVKVGQKKEDKVYDTAESSTMGFVDEEELLNMPGLLADMAKGMMVAPPWMGSPPSDDSPENSDGESLWSY.

A DNA-binding region (AP2/ERF) is located at residues 89–145 (VYRGIRCRSGKWVSEIREPKKTTRVWLGTYPTPEMAAAAYDVAALALKGGDTLLNFP). Residues 225–248 (PPWMGSPPSDDSPENSDGESLWSY) form a disordered region.

The protein belongs to the AP2/ERF transcription factor family. ERF subfamily.

The protein resides in the nucleus. In terms of biological role, probably acts as a transcriptional activator. Binds to the GCC-box pathogenesis-related promoter element. May be involved in the regulation of gene expression by stress factors and by components of stress signal transduction pathways. The protein is Ethylene-responsive transcription factor ERF026 (ERF026) of Arabidopsis thaliana (Mouse-ear cress).